A 440-amino-acid polypeptide reads, in one-letter code: Serine hydroxymethyltransferase (440 aa).

(6S)-5,6,7,8-tetrahydrofolate contacts are provided by residues L119 and 123–125 (GHL). The residue at position 228 (K228) is an N6-(pyridoxal phosphate)lysine. 370–372 (SPF) lines the (6S)-5,6,7,8-tetrahydrofolate pocket.

It belongs to the SHMT family. In terms of assembly, homodimer. The cofactor is pyridoxal 5'-phosphate.

It is found in the cytoplasm. The enzyme catalyses (6R)-5,10-methylene-5,6,7,8-tetrahydrofolate + glycine + H2O = (6S)-5,6,7,8-tetrahydrofolate + L-serine. It functions in the pathway one-carbon metabolism; tetrahydrofolate interconversion. It participates in amino-acid biosynthesis; glycine biosynthesis; glycine from L-serine: step 1/1. In terms of biological role, catalyzes the reversible interconversion of serine and glycine with tetrahydrofolate (THF) serving as the one-carbon carrier. This reaction serves as the major source of one-carbon groups required for the biosynthesis of purines, thymidylate, methionine, and other important biomolecules. Also exhibits THF-independent aldolase activity toward beta-hydroxyamino acids, producing glycine and aldehydes, via a retro-aldol mechanism. The protein is Serine hydroxymethyltransferase of Chlorobium luteolum (strain DSM 273 / BCRC 81028 / 2530) (Pelodictyon luteolum).